The sequence spans 110 residues: NADH-quinone oxidoreductase subunit K (110 aa).

A run of 3 helical transmembrane segments spans residues 13 to 33, 41 to 61, and 73 to 93; these read LNHY…GLFM, ILMS…AFSI, and IIIL…LLIY.

This sequence belongs to the complex I subunit 4L family. NDH-1 is composed of 14 different subunits. Subunits NuoA, H, J, K, L, M, N constitute the membrane sector of the complex.

The protein resides in the cell inner membrane. The catalysed reaction is a quinone + NADH + 5 H(+)(in) = a quinol + NAD(+) + 4 H(+)(out). In terms of biological role, NDH-1 shuttles electrons from NADH, via FMN and iron-sulfur (Fe-S) centers, to quinones in the respiratory chain. The immediate electron acceptor for the enzyme in this species is believed to be ubiquinone. Couples the redox reaction to proton translocation (for every two electrons transferred, four hydrogen ions are translocated across the cytoplasmic membrane), and thus conserves the redox energy in a proton gradient. The chain is NADH-quinone oxidoreductase subunit K from Rickettsia felis (strain ATCC VR-1525 / URRWXCal2) (Rickettsia azadi).